Consider the following 142-residue polypeptide: Metallothiol transferase FosB (142 aa).

The VOC domain occupies 5-120 (NVNHICFSVS…DGHKIELHTG (116 aa)). The Mg(2+) site is built by histidine 8, histidine 67, and glutamate 116. The active-site Proton donor/acceptor is the glutamate 116.

The protein belongs to the fosfomycin resistance protein family. FosB subfamily. Homodimer. Mg(2+) serves as cofactor.

It is found in the cytoplasm. Metallothiol transferase which confers resistance to fosfomycin by catalyzing the addition of a thiol cofactor to fosfomycin. L-cysteine is probably the physiological thiol donor. This chain is Metallothiol transferase FosB, found in Staphylococcus epidermidis (strain ATCC 35984 / DSM 28319 / BCRC 17069 / CCUG 31568 / BM 3577 / RP62A).